Here is a 354-residue protein sequence, read N- to C-terminus: Protein PHLOEM PROTEIN 2-LIKE A8 (354 aa).

Positions 12-179 (TGPQVFINFR…EMILEIQKAL (168 aa)) constitute a TIR domain. Residue glutamate 86 is part of the active site.

The enzyme catalyses NAD(+) + H2O = ADP-D-ribose + nicotinamide + H(+). The chain is Protein PHLOEM PROTEIN 2-LIKE A8 (PP2A8) from Arabidopsis thaliana (Mouse-ear cress).